We begin with the raw amino-acid sequence, 650 residues long: Acetyl-coenzyme A synthetase (650 aa).

CoA-binding positions include 191–194 (RGGR), T311, and N335. Residues 387–389 (GEP), 411–416 (DTWWQT), D500, and R515 each bind ATP. Residue S523 coordinates CoA. R526 lines the ATP pocket. The Mg(2+) site is built by V537, H539, and V542. R584 contacts CoA. K609 is modified (N6-acetyllysine).

Belongs to the ATP-dependent AMP-binding enzyme family. Mg(2+) is required as a cofactor. Acetylated. Deacetylation by the SIR2-homolog deacetylase activates the enzyme.

The catalysed reaction is acetate + ATP + CoA = acetyl-CoA + AMP + diphosphate. In terms of biological role, catalyzes the conversion of acetate into acetyl-CoA (AcCoA), an essential intermediate at the junction of anabolic and catabolic pathways. AcsA undergoes a two-step reaction. In the first half reaction, AcsA combines acetate with ATP to form acetyl-adenylate (AcAMP) intermediate. In the second half reaction, it can then transfer the acetyl group from AcAMP to the sulfhydryl group of CoA, forming the product AcCoA. This chain is Acetyl-coenzyme A synthetase, found in Shewanella sp. (strain MR-4).